The following is a 92-amino-acid chain: Acylphosphatase (92 aa).

In terms of domain architecture, Acylphosphatase-like spans 5–92 (RVKVKVNGRV…GVFERFEVRF (88 aa)). Catalysis depends on residues R20 and N38.

It belongs to the acylphosphatase family.

It catalyses the reaction an acyl phosphate + H2O = a carboxylate + phosphate + H(+). The sequence is that of Acylphosphatase (acyP) from Syntrophotalea carbinolica (strain DSM 2380 / NBRC 103641 / GraBd1) (Pelobacter carbinolicus).